The following is a 509-amino-acid chain: Diacylglycerol kinase 5 (509 aa).

One can recognise a DAGKc domain in the interval 36 to 187; it reads TPASPVLVFI…IDNWHILMRM (152 aa). Over residues 439-452 the composition is skewed to basic and acidic residues; it reads RSVFDPSTPRHQDG. The segment at 439-509 is disordered; it reads RSVFDPSTPR…SNVHGWSHVL (71 aa). The span at 453–467 shows a compositional bias: acidic residues; sequence AEDYDDNEDDSVAEG. Over residues 468-489 the composition is skewed to basic and acidic residues; it reads EEFRKFGAADTFKIPDEGEHSN. Positions 490 to 500 are enriched in basic residues; it reads KKGRASRRRNS.

Belongs to the eukaryotic diacylglycerol kinase family. Monomer.

The catalysed reaction is a 1,2-diacyl-sn-glycerol + ATP = a 1,2-diacyl-sn-glycero-3-phosphate + ADP + H(+). Phosphorylates the second messenger diacylglycerol (DAG) to generate phosphatidic acid (PA), another important signaling molecule. PA is required for plant development and responses to abiotic stress and pathogen attack. May be involved in the accumulation of PA during cold stress. The chain is Diacylglycerol kinase 5 (DGK5) from Arabidopsis thaliana (Mouse-ear cress).